A 658-amino-acid polypeptide reads, in one-letter code: Serine/threonine-protein kinase shk1/pak1 (658 aa).

Disordered stretches follow at residues 1–21, 39–104, 126–147, and 213–365; these read MERG…ITPI, RKLK…SYDE, GGSS…STVI, and GAKP…QQSN. Residues 66–98 show a composition bias toward polar residues; the sequence is PLSQSRTTVSRVSLGSRQHSSSSIRKLQTNVSD. Residues 129 to 140 show a composition bias toward low complexity; that stretch reads SPTSSYGSGSAS. The CRIB domain occupies 147–160; it reads ISSPFDPKHVTHVG. Composition is skewed to low complexity over residues 226–254 and 262–272; these read PLLS…LYPS and ASSSSSPLLSS. Over residues 273 to 300 the composition is skewed to polar residues; that stretch reads QTVKTTTSNASRQPSPLVSSKSTDNIIR. 2 positions are modified to phosphoserine: S301 and S303. The 252-residue stretch at 386-637 folds into the Protein kinase domain; sequence YRNFVKIGQG…SGELLRHPFL (252 aa). ATP-binding positions include 392-400 and K415; that span reads IGQGASGDV. The active-site Proton acceptor is the D505.

This sequence belongs to the protein kinase superfamily. STE Ser/Thr protein kinase family. STE20 subfamily. Forms an activated complex with GTP-bound ras-like cdc42. Interacts with skb1 and the SH3 domain of skb5 via its amino-terminal regulatory domain. Skb1, cdc42 and shk1 are able to form a ternary complex in vivo. Interacts with rga8 and may interact with byr2. Post-translationally, autophosphorylated on serine residues.

The protein localises to the cytoplasm. Its subcellular location is the cytoskeleton. It localises to the spindle. It catalyses the reaction L-seryl-[protein] + ATP = O-phospho-L-seryl-[protein] + ADP + H(+). The catalysed reaction is L-threonyl-[protein] + ATP = O-phospho-L-threonyl-[protein] + ADP + H(+). Its function is as follows. MAP4K component of the MAPK pathway required for the mating pheromone response. Phosphorylates histone H2B to form H2BS10ph. Phosphorylates tea1. Required for skb1-dependent mitotic inhibitory function. Regulates microtubule dynamics and cell polarity. The polypeptide is Serine/threonine-protein kinase shk1/pak1 (shk1) (Schizosaccharomyces pombe (strain 972 / ATCC 24843) (Fission yeast)).